The following is a 153-amino-acid chain: Ribosome maturation factor RimP (153 aa).

This sequence belongs to the RimP family.

Its subcellular location is the cytoplasm. Its function is as follows. Required for maturation of 30S ribosomal subunits. This is Ribosome maturation factor RimP from Coxiella burnetii (strain Dugway 5J108-111).